Reading from the N-terminus, the 143-residue chain is Transcription antitermination protein NusB (143 aa).

This sequence belongs to the NusB family.

Involved in transcription antitermination. Required for transcription of ribosomal RNA (rRNA) genes. Binds specifically to the boxA antiterminator sequence of the ribosomal RNA (rrn) operons. The polypeptide is Transcription antitermination protein NusB (Anaeromyxobacter sp. (strain Fw109-5)).